The chain runs to 443 residues: Intermediate filament protein ifd-2 (443 aa).

The tract at residues 1–58 is head; it reads MTDPLNPTRLQNHPALARIIESGRTNLPTGITTSGALSAYAQNAAAIIRDNREREKVE. The 351-residue stretch at 55–405 folds into the IF rod domain; sequence EKVEIADLNN…KLMENAEHLR (351 aa). Positions 59–90 are coil 1A; the sequence is IADLNNRLARYVEKVRFLEAQNRVLENDIGVF. The linker 1 stretch occupies residues 91–104; it reads RNAAHTHSERIAVY. Residues 105–239 form a coil 1B region; sequence FESEKASLFT…SQHDIAIREE (135 aa). Residues 240–257 are linker 12; the sequence is ISKARRDTTNKNRDYFHN. Residues 258 to 403 form a coil 2 region; the sequence is ELHAAMKEIR…YRKLMENAEH (146 aa). The interval 404–443 is tail; that stretch reads LRTTVQTHVTYNAPPPPLPQSGPRTTSYHAYGSAYNDSLL.

Belongs to the intermediate filament family.

The protein resides in the cytoplasm. In terms of biological role, cytoplasmic intermediate filaments provide mechanical strength to cells. Not essential protein. This is Intermediate filament protein ifd-2 (ifd-2) from Caenorhabditis elegans.